Consider the following 179-residue polypeptide: Adenine phosphoribosyltransferase (179 aa).

It belongs to the purine/pyrimidine phosphoribosyltransferase family. In terms of assembly, homodimer.

Its subcellular location is the cytoplasm. The enzyme catalyses AMP + diphosphate = 5-phospho-alpha-D-ribose 1-diphosphate + adenine. The protein operates within purine metabolism; AMP biosynthesis via salvage pathway; AMP from adenine: step 1/1. Functionally, catalyzes a salvage reaction resulting in the formation of AMP, that is energically less costly than de novo synthesis. The polypeptide is Adenine phosphoribosyltransferase (Nitrobacter hamburgensis (strain DSM 10229 / NCIMB 13809 / X14)).